The following is a 258-amino-acid chain: Thiazole synthase (258 aa).

Lysine 98 functions as the Schiff-base intermediate with DXP in the catalytic mechanism. 1-deoxy-D-xylulose 5-phosphate is bound by residues glycine 159, alanine 185–glycine 186, and asparagine 207–threonine 208.

This sequence belongs to the ThiG family. Homotetramer. Forms heterodimers with either ThiH or ThiS.

Its subcellular location is the cytoplasm. The catalysed reaction is [ThiS sulfur-carrier protein]-C-terminal-Gly-aminoethanethioate + 2-iminoacetate + 1-deoxy-D-xylulose 5-phosphate = [ThiS sulfur-carrier protein]-C-terminal Gly-Gly + 2-[(2R,5Z)-2-carboxy-4-methylthiazol-5(2H)-ylidene]ethyl phosphate + 2 H2O + H(+). It participates in cofactor biosynthesis; thiamine diphosphate biosynthesis. Catalyzes the rearrangement of 1-deoxy-D-xylulose 5-phosphate (DXP) to produce the thiazole phosphate moiety of thiamine. Sulfur is provided by the thiocarboxylate moiety of the carrier protein ThiS. In vitro, sulfur can be provided by H(2)S. The sequence is that of Thiazole synthase from Bacillus thuringiensis subsp. konkukian (strain 97-27).